The sequence spans 191 residues: UPF0228 protein MM_1428 (191 aa).

The protein belongs to the UPF0228 family.

The sequence is that of UPF0228 protein MM_1428 from Methanosarcina mazei (strain ATCC BAA-159 / DSM 3647 / Goe1 / Go1 / JCM 11833 / OCM 88) (Methanosarcina frisia).